A 385-amino-acid polypeptide reads, in one-letter code: Chorismate synthase (385 aa).

Residues 43–63 (PDLDRRRPGTSRHVTQRNEPD) form a disordered region. Positions 48 and 54 each coordinate NADP(+). FMN is bound by residues 125–127 (RSS), 238–239 (NA), G278, 293–297 (KPTSS), and R319. The segment covering 363-372 (AQAPRTETAP) has biased composition (low complexity). The tract at residues 363-385 (AQAPRTETAPATPPLDAGDDIEA) is disordered.

This sequence belongs to the chorismate synthase family. Homotetramer. It depends on FMNH2 as a cofactor.

The enzyme catalyses 5-O-(1-carboxyvinyl)-3-phosphoshikimate = chorismate + phosphate. It functions in the pathway metabolic intermediate biosynthesis; chorismate biosynthesis; chorismate from D-erythrose 4-phosphate and phosphoenolpyruvate: step 7/7. Its function is as follows. Catalyzes the anti-1,4-elimination of the C-3 phosphate and the C-6 proR hydrogen from 5-enolpyruvylshikimate-3-phosphate (EPSP) to yield chorismate, which is the branch point compound that serves as the starting substrate for the three terminal pathways of aromatic amino acid biosynthesis. This reaction introduces a second double bond into the aromatic ring system. This chain is Chorismate synthase, found in Leptothrix cholodnii (strain ATCC 51168 / LMG 8142 / SP-6) (Leptothrix discophora (strain SP-6)).